Reading from the N-terminus, the 473-residue chain is MPLPDKFFLFIQDDYHNVKLRVKINEKVLRGQPLIFSDDFNVPVHAPTSGLIENICFNSDSIKKNIKIVISPDYLDQWIRLNPIKDYKKYAPEKLIKIIHQSGVVGLGGGQFPSSKKIIFSINRAHTLIVNAVESEPYITSDNCLIYNHISEILIGCKIICWITKIKTVLIAIQEDNIQSISKIQHLIKNKSLFKICIIKKKYPAGSSKVLVKSLTGKEVPHGKHSIDIGYLIFNVATIFSIKRAIINGKPLTERVVTLMSDKNLLSGNFWVRIGTPIKYFLTSNKLKQSFIASVYLGGPFMGKKINNLNHSILKKTNSIFITHKKEKNESISEKTCIRCGYCSYVCPVNLLPQQLYWYIKNKNHVQTKKHYVLDCIECKACEKVCPSYIPLVKYFIQEKNILKNITLENNRKKMSLIRFKTREQRLFNEKRMIHENNDTFLMKKKDKKINNITKTVLKKTLQDAIERMKSKQ.

4Fe-4S ferredoxin-type domains follow at residues K328 to Y357 and T368 to F396. Positions 337, 340, 343, 347, 376, 379, 382, and 386 each coordinate [4Fe-4S] cluster.

It belongs to the 4Fe4S bacterial-type ferredoxin family. RnfC subfamily. As to quaternary structure, the complex is composed of six subunits: RnfA, RnfB, RnfC, RnfD, RnfE and RnfG. It depends on [4Fe-4S] cluster as a cofactor.

The protein resides in the cell inner membrane. Its function is as follows. Part of a membrane-bound complex that couples electron transfer with translocation of ions across the membrane. This chain is Ion-translocating oxidoreductase complex subunit C, found in Buchnera aphidicola subsp. Acyrthosiphon pisum (strain APS) (Acyrthosiphon pisum symbiotic bacterium).